A 226-amino-acid polypeptide reads, in one-letter code: High affinity heme transporter (226 aa).

Residues 1–20 (MISLKIYFVLIFLFLKGINS) form the signal peptide. The interval 72–101 (CDTTILSETNNVTGSCYVANCANDTVLEIC) is heme binding. Serine 199 carries GPI-anchor amidated serine lipidation. Residues 200 to 226 (SASSTIFKPSYFISCLLSVGLYLVLNF) constitute a propeptide, removed in mature form.

It localises to the cell membrane. It is found in the vacuole membrane. In terms of biological role, high affinity heme transporter involved in the assimilation of exogenous heme during conditions of low cellular iron. This Schizosaccharomyces pombe (strain 972 / ATCC 24843) (Fission yeast) protein is High affinity heme transporter.